Here is a 90-residue protein sequence, read N- to C-terminus: RNA-binding protein Hfq (90 aa).

Positions 11–71 (DVFLNSVRKT…ISTIMPAAPV (61 aa)) constitute a Sm domain.

The protein belongs to the Hfq family. Homohexamer.

RNA chaperone that binds small regulatory RNA (sRNAs) and mRNAs to facilitate mRNA translational regulation in response to envelope stress, environmental stress and changes in metabolite concentrations. Also binds with high specificity to tRNAs. The polypeptide is RNA-binding protein Hfq (Maricaulis maris (strain MCS10) (Caulobacter maris)).